Reading from the N-terminus, the 496-residue chain is Glycylpeptide N-tetradecanoyltransferase 1 (496 aa).

The interval 1-81 (MADESETAVK…DSTQDQPVKM (81 aa)) is disordered. A phosphoserine mark is found at serine 31 and serine 47. Over residues 55–66 (KKKKKKQKKKKE) the composition is skewed to basic residues. At serine 83 the chain carries Phosphoserine. Residues glutamine 118, phenylalanine 119, tryptophan 120, phenylalanine 247, leucine 248, cysteine 249, valine 250, serine 256, arginine 258, valine 259, and alanine 260 each coordinate tetradecanoyl-CoA.

It belongs to the NMT family.

The protein resides in the cytoplasm. It localises to the cytosol. Its subcellular location is the membrane. The enzyme catalyses N-terminal glycyl-[protein] + tetradecanoyl-CoA = N-tetradecanoylglycyl-[protein] + CoA + H(+). It carries out the reaction N-terminal glycyl-L-lysyl-[protein] + tetradecanoyl-CoA = N-terminal glycyl-(N(6)-tetradecanoyl)-L-lysyl-[protein] + CoA + H(+). Adds a myristoyl group to the N-terminal glycine residue of certain cellular and viral proteins. Also able to mediate N-terminal lysine myristoylation of proteins: catalyzes myristoylation of ARF6 on both 'Gly-2' and 'Lys-3'. Lysine myristoylation is required to maintain ARF6 on membranes during the GTPase cycle. In Rattus norvegicus (Rat), this protein is Glycylpeptide N-tetradecanoyltransferase 1 (Nmt1).